Here is a 308-residue protein sequence, read N- to C-terminus: Pycsar effector protein PaPycTIR (308 aa).

Residue 54–143 coordinates a nucleoside 3',5'-cyclic phosphate; the sequence is LITEDAEDSE…RQVTRQLVDR (90 aa). Positions 160–278 are TIR-like; that stretch reads VFIICSVEAL…DLKGLTTIGY (119 aa).

Its subcellular location is the cytoplasm. It carries out the reaction NAD(+) + H2O = ADP-D-ribose + nicotinamide + H(+). Its function is as follows. Pycsar (pyrimidine cyclase system for antiphage resistance) provides immunity against bacteriophage. The pyrimidine cyclase (PycC) synthesizes cyclic nucleotides in response to infection; these serve as specific second messenger signals. The signals activate the adjacent effector, leading to bacterial cell death and abortive phage infection. A clade A Pycsar system. In terms of biological role, the effector gene of a two-gene Pycsar system. Expression of this and adjacent uridylate cyclase PaPycC (AC P0DV40) probably confers resistance to bacteriophage. The genes are probably only expressed in response to bacteriophage infection. Probably only responds to cUMP (produced by its cognate NTP cyclase), acts by depleting cellular NAD(+) levels. The protein is Pycsar effector protein PaPycTIR of Pseudomonas aeruginosa.